A 160-amino-acid chain; its full sequence is Transcription antitermination protein NusB (160 aa).

Belongs to the NusB family.

Functionally, involved in transcription antitermination. Required for transcription of ribosomal RNA (rRNA) genes. Binds specifically to the boxA antiterminator sequence of the ribosomal RNA (rrn) operons. This is Transcription antitermination protein NusB from Sinorhizobium fredii (strain NBRC 101917 / NGR234).